The sequence spans 136 residues: Small ribosomal subunit protein uS8 (136 aa).

It belongs to the universal ribosomal protein uS8 family. Part of the 30S ribosomal subunit. Contacts proteins S5 and S12.

Functionally, one of the primary rRNA binding proteins, it binds directly to 16S rRNA central domain where it helps coordinate assembly of the platform of the 30S subunit. This Sulfurihydrogenibium sp. (strain YO3AOP1) protein is Small ribosomal subunit protein uS8.